Here is a 357-residue protein sequence, read N- to C-terminus: Hemolysin VllY (357 aa).

2 consecutive VOC domains span residues 12–132 (GFEF…FVDR) and 162–313 (EIDH…IFTQ). Residues His165, His243, and Glu322 each contribute to the Fe cation site.

The protein belongs to the 4HPPD family. Fe cation serves as cofactor.

The protein is Hemolysin VllY (vllY) of Vibrio vulnificus (strain CMCP6).